Reading from the N-terminus, the 330-residue chain is Putative F-box protein At1g57690 (330 aa).

The F-box domain occupies 25–72; the sequence is VDIISSLPDVILQHILFSFQTKYAIRTSVLSKRWRHEADAINKALSQY.

The chain is Putative F-box protein At1g57690 from Arabidopsis thaliana (Mouse-ear cress).